Consider the following 238-residue polypeptide: Phosphatidylcholine synthase (238 aa).

Residues 1 to 16 are Cytoplasmic-facing; that stretch reads MPVNLSMTPINKAKAW. A helical membrane pass occupies residues 17-37; sequence GVHAVTASGVILALLALLALV. The Periplasmic portion of the chain corresponds to 38–41; sequence DNKP. Residues 42 to 62 traverse the membrane as a helical segment; that stretch reads QACLLWLGLALLVDGLDGTLA. Over 63-75 the chain is Cytoplasmic; sequence RKYEVKEMLPHFD. A helical membrane pass occupies residues 76–96; sequence GSVLDLVIDYLTYVFIPAIFI. The Periplasmic segment spans residues 97–104; that stretch reads YRYIPLPE. The chain crosses the membrane as a helical span at residues 105 to 125; it reads HFELLAVGVILVSSLFCFCNV. Residues 126–132 lie on the Cytoplasmic side of the membrane; it reads NMKSTDN. A helical transmembrane segment spans residues 133–153; sequence YFVGFPAAWNVVAVYFYVLDL. Residues 154 to 155 lie on the Periplasmic side of the membrane; it reads HP. A helical membrane pass occupies residues 156 to 176; the sequence is WVNLATVLVLAALTLTRMKFL. The Cytoplasmic portion of the chain corresponds to 177–183; sequence HPFRVRQ. Residues 184–204 traverse the membrane as a helical segment; the sequence is FMPLNIAVTFVWLISSGLLIV. The Periplasmic segment spans residues 205–209; that stretch reads QQPAD. A helical transmembrane segment spans residues 210–230; the sequence is LPILLGLWFAASAYFVGICLW. Topologically, residues 231 to 238 are cytoplasmic; sequence RSAREWFG.

This sequence belongs to the CDP-alcohol phosphatidyltransferase class-I family. The cofactor is Mn(2+).

The protein resides in the cell inner membrane. It catalyses the reaction a CDP-1,2-diacyl-sn-glycerol + choline = a 1,2-diacyl-sn-glycero-3-phosphocholine + CMP + H(+). In terms of biological role, condenses choline with CDP-diglyceride to produce phosphatidylcholine and CMP. This is Phosphatidylcholine synthase from Pseudomonas aeruginosa (strain ATCC 15692 / DSM 22644 / CIP 104116 / JCM 14847 / LMG 12228 / 1C / PRS 101 / PAO1).